Consider the following 130-residue polypeptide: Large ribosomal subunit protein bL20 (130 aa).

Belongs to the bacterial ribosomal protein bL20 family.

Functionally, binds directly to 23S ribosomal RNA and is necessary for the in vitro assembly process of the 50S ribosomal subunit. It is not involved in the protein synthesizing functions of that subunit. The polypeptide is Large ribosomal subunit protein bL20 (Nocardioides sp. (strain ATCC BAA-499 / JS614)).